A 520-amino-acid chain; its full sequence is Maturase K (520 aa).

It belongs to the intron maturase 2 family. MatK subfamily.

It is found in the plastid. Its subcellular location is the chloroplast. Usually encoded in the trnK tRNA gene intron. Probably assists in splicing its own and other chloroplast group II introns. The polypeptide is Maturase K (Galanthus elwesii (Giant snowdrop)).